Consider the following 131-residue polypeptide: Small ribosomal subunit protein bS6 (131 aa).

Residues 97–131 (TEASPMVKAKDERRRDVAEDLDEEEVDDVAEDSEE) form a disordered region. Residues 104-114 (KAKDERRRDVA) show a composition bias toward basic and acidic residues. Acidic residues predominate over residues 115–131 (EDLDEEEVDDVAEDSEE).

The protein belongs to the bacterial ribosomal protein bS6 family.

Functionally, binds together with bS18 to 16S ribosomal RNA. The sequence is that of Small ribosomal subunit protein bS6 from Proteus mirabilis (strain HI4320).